A 360-amino-acid chain; its full sequence is Nucleoporin SEH1 (360 aa).

WD repeat units follow at residues aspartate 10–cysteine 49, threonine 55–lysine 96, aspartate 111–glutamine 152, serine 160–alanine 210, serine 217–serine 258, and asparagine 276–cysteine 315.

It belongs to the WD repeat SEC13 family. Component of the Nup107-160 subcomplex of the nuclear pore complex (NPC). The Nup107-160 subcomplex includes NUP160, NUP133, NUP107, NUP98, NUP85, NUP43, NUP37, SEH1 and SEC13. Component of the GATOR2 subcomplex, composed of MIOS, SEC13, SEH1L, WDR24 and WDR59. The GATOR2 complex interacts with CASTOR1 and CASTOR2; the interaction is negatively regulated by arginine. The GATOR2 complex interacts with SESN1, SESN2 and SESN3; the interaction is negatively regulated by amino acids.

Its subcellular location is the chromosome. It is found in the centromere. It localises to the kinetochore. The protein resides in the nucleus. The protein localises to the nuclear pore complex. Its subcellular location is the lysosome membrane. The GATOR2 complex is negatively regulated by the upstream amino acid sensors CASTOR1 and SESN2, which sequester the GATOR2 complex in absence of amino acids. In the presence of abundant amino acids, GATOR2 is released from CASTOR1 and SESN2 and activated. Functionally, component of the Nup107-160 subcomplex of the nuclear pore complex (NPC). The Nup107-160 subcomplex is required for the assembly of a functional NPC. The Nup107-160 subcomplex is also required for normal kinetochore microtubule attachment, mitotic progression and chromosome segregation. This subunit plays a role in recruitment of the Nup107-160 subcomplex to the kinetochore. Its function is as follows. As a component of the GATOR2 complex, functions as an activator of the amino acid-sensing branch of the mTORC1 signaling pathway. The GATOR2 complex indirectly activates mTORC1 through the inhibition of the GATOR1 subcomplex. GATOR2 probably acts as an E3 ubiquitin-protein ligase toward GATOR1. In the presence of abundant amino acids, the GATOR2 complex mediates ubiquitination of the NPRL2 core component of the GATOR1 complex, leading to GATOR1 inactivation. In the absence of amino acids, GATOR2 is inhibited, activating the GATOR1 complex. This chain is Nucleoporin SEH1 (seh1l), found in Xenopus tropicalis (Western clawed frog).